The sequence spans 297 residues: Ketohexokinase (297 aa).

Asp15, Gly41, Asn42, and Asn45 together coordinate beta-D-fructose. ATP is bound by residues Arg107, 225–228, and 254–257; these read AEEG and GAGD. Asp257 serves as a coordination point for beta-D-fructose.

Belongs to the carbohydrate kinase PfkB family. As to quaternary structure, homodimer.

It carries out the reaction beta-D-fructose + ATP = beta-D-fructose 1-phosphate + ADP + H(+). Its pathway is carbohydrate metabolism; fructose metabolism. With respect to regulation, requires potassium. Inhibition by ADP. In terms of biological role, catalyzes the phosphorylation of the ketose sugar fructose to fructose-1-phosphate. This chain is Ketohexokinase (KHK), found in Pongo abelii (Sumatran orangutan).